The following is a 97-amino-acid chain: Acylphosphatase (97 aa).

One can recognise an Acylphosphatase-like domain in the interval 3–97 (KVKMIVSGRV…PDFTDFNIKY (95 aa)). Catalysis depends on residues arginine 18 and asparagine 36.

Belongs to the acylphosphatase family.

It carries out the reaction an acyl phosphate + H2O = a carboxylate + phosphate + H(+). This is Acylphosphatase (acyP) from Lactococcus lactis subsp. lactis (strain IL1403) (Streptococcus lactis).